Here is a 146-residue protein sequence, read N- to C-terminus: Hemoglobin subunit delta (146 aa).

A Globin domain is found at 2–146 (HLTGDEKSAV…VATALAHKYH (145 aa)). The residue at position 50 (Ser50) is a Phosphoserine. 2 residues coordinate heme b: His63 and His92.

Belongs to the globin family. In terms of assembly, heterotetramer of two delta chains and two alpha chains. As to expression, red blood cells.

This Saimiri sciureus (Common squirrel monkey) protein is Hemoglobin subunit delta (HBD).